Consider the following 216-residue polypeptide: ATP phosphoribosyltransferase (216 aa).

This sequence belongs to the ATP phosphoribosyltransferase family. Short subfamily. Heteromultimer composed of HisG and HisZ subunits.

It localises to the cytoplasm. The catalysed reaction is 1-(5-phospho-beta-D-ribosyl)-ATP + diphosphate = 5-phospho-alpha-D-ribose 1-diphosphate + ATP. It participates in amino-acid biosynthesis; L-histidine biosynthesis; L-histidine from 5-phospho-alpha-D-ribose 1-diphosphate: step 1/9. Functionally, catalyzes the condensation of ATP and 5-phosphoribose 1-diphosphate to form N'-(5'-phosphoribosyl)-ATP (PR-ATP). Has a crucial role in the pathway because the rate of histidine biosynthesis seems to be controlled primarily by regulation of HisG enzymatic activity. This Acidovorax ebreus (strain TPSY) (Diaphorobacter sp. (strain TPSY)) protein is ATP phosphoribosyltransferase.